A 197-amino-acid chain; its full sequence is Ribose 1,5-bisphosphate phosphokinase PhnN (197 aa).

Residue 21 to 28 (GPSGAGKD) participates in ATP binding.

This sequence belongs to the ribose 1,5-bisphosphokinase family.

It catalyses the reaction alpha-D-ribose 1,5-bisphosphate + ATP = 5-phospho-alpha-D-ribose 1-diphosphate + ADP. It functions in the pathway metabolic intermediate biosynthesis; 5-phospho-alpha-D-ribose 1-diphosphate biosynthesis; 5-phospho-alpha-D-ribose 1-diphosphate from D-ribose 5-phosphate (route II): step 3/3. Functionally, catalyzes the phosphorylation of ribose 1,5-bisphosphate to 5-phospho-D-ribosyl alpha-1-diphosphate (PRPP). The polypeptide is Ribose 1,5-bisphosphate phosphokinase PhnN (Rhizobium etli (strain CIAT 652)).